Consider the following 391-residue polypeptide: Phosphoglycerate kinase (391 aa).

Substrate contacts are provided by residues 21–23 (DLN), arginine 36, 59–62 (HLGR), arginine 113, and arginine 146. Residues lysine 197, glutamate 319, and 345–348 (GGDT) each bind ATP.

The protein belongs to the phosphoglycerate kinase family. Monomer.

Its subcellular location is the cytoplasm. It catalyses the reaction (2R)-3-phosphoglycerate + ATP = (2R)-3-phospho-glyceroyl phosphate + ADP. It participates in carbohydrate degradation; glycolysis; pyruvate from D-glyceraldehyde 3-phosphate: step 2/5. The protein is Phosphoglycerate kinase of Shewanella sediminis (strain HAW-EB3).